Here is a 256-residue protein sequence, read N- to C-terminus: ATP synthase peripheral stalk subunit b, mitochondrial (256 aa).

A mitochondrion-targeting transit peptide spans 1–42; it reads MLSRVVLSAAAAAAPSLKNAALLGPGVLQATRIFHTGQPSLA. The residue at position 131 (K131) is an N6-succinyllysine. Residues K139, K154, K162, K221, K233, and K244 each carry the N6-acetyllysine modification.

This sequence belongs to the eukaryotic ATPase B chain family. As to quaternary structure, component of the ATP synthase complex composed at least of ATP5F1A/subunit alpha, ATP5F1B/subunit beta, ATP5MC1/subunit c (homooctomer), MT-ATP6/subunit a, MT-ATP8/subunit 8, ATP5ME/subunit e, ATP5MF/subunit f, ATP5MG/subunit g, ATP5MK/subunit k, ATP5MJ/subunit j, ATP5F1C/subunit gamma, ATP5F1D/subunit delta, ATP5F1E/subunit epsilon, ATP5PF/subunit F6, ATP5PB/subunit b, ATP5PD/subunit d, ATP5PO/subunit OSCP. ATP synthase complex consists of a soluble F(1) head domain (subunits alpha(3) and beta(3)) - the catalytic core - and a membrane F(0) domain - the membrane proton channel (subunits c, a, 8, e, f, g, k and j). These two domains are linked by a central stalk (subunits gamma, delta, and epsilon) rotating inside the F1 region and a stationary peripheral stalk (subunits F6, b, d, and OSCP).

It localises to the mitochondrion. Its subcellular location is the mitochondrion inner membrane. Subunit b, of the mitochondrial membrane ATP synthase complex (F(1)F(0) ATP synthase or Complex V) that produces ATP from ADP in the presence of a proton gradient across the membrane which is generated by electron transport complexes of the respiratory chain. ATP synthase complex consist of a soluble F(1) head domain - the catalytic core - and a membrane F(1) domain - the membrane proton channel. These two domains are linked by a central stalk rotating inside the F(1) region and a stationary peripheral stalk. During catalysis, ATP synthesis in the catalytic domain of F(1) is coupled via a rotary mechanism of the central stalk subunits to proton translocation. In vivo, can only synthesize ATP although its ATP hydrolase activity can be activated artificially in vitro. Part of the complex F(0) domain. Part of the complex F(0) domain and the peripheric stalk, which acts as a stator to hold the catalytic alpha(3)beta(3) subcomplex and subunit a/ATP6 static relative to the rotary elements. The protein is ATP synthase peripheral stalk subunit b, mitochondrial of Bos taurus (Bovine).